Reading from the N-terminus, the 226-residue chain is MSTYPLRDAVAAIATPLADALGIALWGIEIIDGGRMVLRVYVDAKPGMPVPADTAEATESATPEGVALEGSTPEGVTIDQCARLSRQLGLALDVEDVVRDAYVLEVSSPGLERPFFEIAQVVPYVGRTIELTLAVPHPEWPGRRKFRADIVRVEGDTLTFLPDTAPRPDEDPAPISVAWDDVKKAHLIHVFPDTTRPQPGGKTGQRKKAQPKKPARGGAPHDDTTD.

The segment at 190–226 is disordered; the sequence is VFPDTTRPQPGGKTGQRKKAQPKKPARGGAPHDDTTD. The span at 204-215 shows a compositional bias: basic residues; it reads GQRKKAQPKKPA.

The protein belongs to the RimP family.

Its subcellular location is the cytoplasm. In terms of biological role, required for maturation of 30S ribosomal subunits. The protein is Ribosome maturation factor RimP of Nitratidesulfovibrio vulgaris (strain DSM 19637 / Miyazaki F) (Desulfovibrio vulgaris).